A 475-amino-acid polypeptide reads, in one-letter code: Ribulose bisphosphate carboxylase large chain (475 aa).

A propeptide spanning residues 1–2 (MS) is cleaved from the precursor. Position 3 is an N-acetylproline (proline 3). An N6,N6,N6-trimethyllysine modification is found at lysine 14. Positions 123 and 173 each coordinate substrate. The Proton acceptor role is filled by lysine 175. Lysine 177 serves as a coordination point for substrate. Mg(2+) contacts are provided by lysine 201, aspartate 203, and glutamate 204. At lysine 201 the chain carries N6-carboxylysine. Histidine 294 (proton acceptor) is an active-site residue. 3 residues coordinate substrate: arginine 295, histidine 327, and serine 379.

This sequence belongs to the RuBisCO large chain family. Type I subfamily. As to quaternary structure, heterohexadecamer of 8 large chains and 8 small chains; disulfide-linked. The disulfide link is formed within the large subunit homodimers. Mg(2+) is required as a cofactor. In terms of processing, the disulfide bond which can form in the large chain dimeric partners within the hexadecamer appears to be associated with oxidative stress and protein turnover.

The protein localises to the plastid. It is found in the chloroplast. The catalysed reaction is 2 (2R)-3-phosphoglycerate + 2 H(+) = D-ribulose 1,5-bisphosphate + CO2 + H2O. The enzyme catalyses D-ribulose 1,5-bisphosphate + O2 = 2-phosphoglycolate + (2R)-3-phosphoglycerate + 2 H(+). Functionally, ruBisCO catalyzes two reactions: the carboxylation of D-ribulose 1,5-bisphosphate, the primary event in carbon dioxide fixation, as well as the oxidative fragmentation of the pentose substrate in the photorespiration process. Both reactions occur simultaneously and in competition at the same active site. In Populus tremuloides (Quaking aspen), this protein is Ribulose bisphosphate carboxylase large chain.